A 127-amino-acid chain; its full sequence is Fluoride-specific ion channel FluC (127 aa).

4 helical membrane passes run 4–24, 38–58, 71–91, and 104–124; these read LSVL…RYLI, YGTL…IAAF, IIGL…MDNV, and LNVL…FQLL. 2 residues coordinate Na(+): Gly78 and Thr81.

The protein belongs to the fluoride channel Fluc/FEX (TC 1.A.43) family.

The protein localises to the cell inner membrane. The catalysed reaction is fluoride(in) = fluoride(out). Na(+) is not transported, but it plays an essential structural role and its presence is essential for fluoride channel function. Fluoride-specific ion channel. Important for reducing fluoride concentration in the cell, thus reducing its toxicity. The sequence is that of Fluoride-specific ion channel FluC from Vibrio campbellii (strain ATCC BAA-1116).